The primary structure comprises 426 residues: MDERLWEWDFEVAEAIACEERRQSRTIELIASENFTSPAVLAAVGSVLTNKYAEGYPGRRYYGGCECVDRVEELAIQRAKQLFGAPHVNVQPHSGAQANMAAYFAVLQPGDRILGMSLQHGGHLTHGAKVNLSGRWFEVAFYGVDPETERIDYDAVWHIAREIRPKLIISGASAYPRVIDFARLREIADDVGAILMADIAHIAGLVAVGLHPSPIGVAQLVTTTTHKTLRGSRGGMIMCDAEFAEAVDKAVFPGTQGGPLMHVIAGKAVALGEALRPTFRTYIERVLENARVLAETLQAEGFRLVSGGTDNHLLLVDLRSHGLSGRKAERVLDEVGITVNKNTIPNDPKPPTQASGIRLGTPAMTTRGFGPDEMRLTARWIADVLRAPDDESVKARVRAEVAELVSRFPVPGVTIEARTGVDDGTV.

(6S)-5,6,7,8-tetrahydrofolate contacts are provided by residues L118 and 122–124; that span reads GHL. The residue at position 227 (K227) is an N6-(pyridoxal phosphate)lysine. The disordered stretch occupies residues 342-368; that stretch reads NTIPNDPKPPTQASGIRLGTPAMTTRG.

The protein belongs to the SHMT family. In terms of assembly, homodimer. Requires pyridoxal 5'-phosphate as cofactor.

It localises to the cytoplasm. It carries out the reaction (6R)-5,10-methylene-5,6,7,8-tetrahydrofolate + glycine + H2O = (6S)-5,6,7,8-tetrahydrofolate + L-serine. Its pathway is one-carbon metabolism; tetrahydrofolate interconversion. The protein operates within amino-acid biosynthesis; glycine biosynthesis; glycine from L-serine: step 1/1. Functionally, catalyzes the reversible interconversion of serine and glycine with tetrahydrofolate (THF) serving as the one-carbon carrier. This reaction serves as the major source of one-carbon groups required for the biosynthesis of purines, thymidylate, methionine, and other important biomolecules. Also exhibits THF-independent aldolase activity toward beta-hydroxyamino acids, producing glycine and aldehydes, via a retro-aldol mechanism. The sequence is that of Serine hydroxymethyltransferase from Thermomicrobium roseum (strain ATCC 27502 / DSM 5159 / P-2).